Reading from the N-terminus, the 51-residue chain is Astexin-1 (51 aa).

Positions 1-28 (MHTPIISETVQPKTAGLIVLGKASAETR) are excised as a propeptide. Positions 29–37 (GLSQGVEPD) form a cross-link, isoaspartyl glycine isopeptide (Gly-Asp).

This lasso peptide is probably hydrolyzed to a linear form by the isopeptidase AtxE1, in vivo.

In terms of biological role, shows weak antimicrobial activity against its phylogenetic relative Caulobacter crescentus. Does not show activity against other bacteria tested (E.coli, Vibrio sp, Burkhoderia thailandensis, and Salmonella newport). This Asticcacaulis excentricus (strain ATCC 15261 / DSM 4724 / KCTC 12464 / NCIMB 9791 / VKM B-1370 / CB 48) protein is Astexin-1.